Here is a 312-residue protein sequence, read N- to C-terminus: tRNA dimethylallyltransferase (312 aa).

Position 12-19 (12-19 (GPTAIGKS)) interacts with ATP. 14 to 19 (TAIGKS) contacts substrate. 2 interaction with substrate tRNA regions span residues 38-41 (DSKL) and 162-166 (QRVLR).

It belongs to the IPP transferase family. Monomer. Mg(2+) serves as cofactor.

It catalyses the reaction adenosine(37) in tRNA + dimethylallyl diphosphate = N(6)-dimethylallyladenosine(37) in tRNA + diphosphate. Functionally, catalyzes the transfer of a dimethylallyl group onto the adenine at position 37 in tRNAs that read codons beginning with uridine, leading to the formation of N6-(dimethylallyl)adenosine (i(6)A). This is tRNA dimethylallyltransferase from Buchnera aphidicola subsp. Cinara cedri (strain Cc).